Here is a 493-residue protein sequence, read N- to C-terminus: Transcription termination factor MTERF5, chloroplastic (493 aa).

Residues 1–43 (MQSLSQLGPSEIFLVARREKPSTRAQLWFTGRLSFRQETNGIR) constitute a chloroplast transit peptide.

It belongs to the mTERF family. In terms of assembly, interacts with pTAC6. In terms of tissue distribution, expressed in roots, rosette leaves, cauline leaves, stems, flower buds and open flowers.

Its subcellular location is the plastid. It is found in the chloroplast. Its function is as follows. Transcription termination factor required for processing and steady-state levels of plastid transcripts. Involved also in chloroplast transcriptional pausing, a general feature of chloroplast genes. Specifically and positively regulates the transcription of chloroplast psbEFLJ encoding for photosystem II (PSII) core subunits psbE, psbF, psbL and psbJ; causes the plastid-encoded RNA polymerase (PEP) complex to pause at psbEFLJ by binding to the +30 to +51 region of double-stranded DNA, and recruits additional pTAC6 to the transcriptionally paused region of psbEFLJ. May play a role in response to abiotic stresses. The chain is Transcription termination factor MTERF5, chloroplastic from Arabidopsis thaliana (Mouse-ear cress).